Reading from the N-terminus, the 153-residue chain is Ribosome maturation factor RimP (153 aa).

This sequence belongs to the RimP family.

It localises to the cytoplasm. Functionally, required for maturation of 30S ribosomal subunits. The polypeptide is Ribosome maturation factor RimP (Nostoc sp. (strain PCC 7120 / SAG 25.82 / UTEX 2576)).